The chain runs to 468 residues: UDP-N-acetylmuramate--L-alanine ligase (468 aa).

121–127 serves as a coordination point for ATP; it reads GSHGKTT.

Belongs to the MurCDEF family.

It localises to the cytoplasm. The catalysed reaction is UDP-N-acetyl-alpha-D-muramate + L-alanine + ATP = UDP-N-acetyl-alpha-D-muramoyl-L-alanine + ADP + phosphate + H(+). Its pathway is cell wall biogenesis; peptidoglycan biosynthesis. Functionally, cell wall formation. This Borrelia garinii subsp. bavariensis (strain ATCC BAA-2496 / DSM 23469 / PBi) (Borreliella bavariensis) protein is UDP-N-acetylmuramate--L-alanine ligase.